The sequence spans 356 residues: N-acyl-phosphatidylethanolamine-hydrolyzing phospholipase D 1 (356 aa).

The Zn(2+) site is built by H144 and H146. Y147 contributes to the an N-acyl-1,2-diacyl-sn-glycero-3-phosphoethanolamine binding site. Zn(2+) is bound by residues D148, H149, H217, and D248. Position 286 (H286) interacts with an N-acyl-1,2-diacyl-sn-glycero-3-phosphoethanolamine. H308 provides a ligand contact to Zn(2+).

This sequence belongs to the NAPE-PLD family. The cofactor is Zn(2+). Expressed in interneurons that are in close proximity to the primary sensory neurons. Predominantly expressed in the pharynx but can also be found in cell bodies of the dorsal and ventral nerve cords.

It carries out the reaction an N-acyl-1,2-diacyl-sn-glycero-3-phosphoethanolamine + H2O = an N-acylethanolamine + a 1,2-diacyl-sn-glycero-3-phosphate + H(+). The enzyme catalyses 1,2-dihexadecanoyl-sn-glycero-3-phospho-(N-hexadecanoyl)-ethanolamine + H2O = 1,2-dihexadecanoyl-sn-glycero-3-phosphate + N-hexadecanoylethanolamine + H(+). It catalyses the reaction N-(5Z,8Z,11Z,14Z-eicosatetraenoyl)-1,2-di-(9Z-octadecenoyl)-sn-glycero-3-phosphoethanolamine + H2O = N-(5Z,8Z,11Z,14Z-eicosatetraenoyl)-ethanolamine + 1,2-di-(9Z-octadecenoyl)-sn-glycero-3-phosphate + H(+). Functionally, D-type phospholipase that hydrolyzes N-acyl-phosphatidylethanolamines (NAPEs) to produce bioactive N-acylethanolamines/fatty acid ethanolamides (NAEs/FAEs) and phosphatidic acid. NAEs are bioactive lipids that are involved in diverse physiological processes such as growth and lifespan. The polypeptide is N-acyl-phosphatidylethanolamine-hydrolyzing phospholipase D 1 (Caenorhabditis elegans).